Here is a 339-residue protein sequence, read N- to C-terminus: Phosphoribosylformylglycinamidine cyclo-ligase (339 aa).

This sequence belongs to the AIR synthase family.

Its subcellular location is the cytoplasm. The catalysed reaction is 2-formamido-N(1)-(5-O-phospho-beta-D-ribosyl)acetamidine + ATP = 5-amino-1-(5-phospho-beta-D-ribosyl)imidazole + ADP + phosphate + H(+). It functions in the pathway purine metabolism; IMP biosynthesis via de novo pathway; 5-amino-1-(5-phospho-D-ribosyl)imidazole from N(2)-formyl-N(1)-(5-phospho-D-ribosyl)glycinamide: step 2/2. This is Phosphoribosylformylglycinamidine cyclo-ligase from Methanobrevibacter smithii (strain ATCC 35061 / DSM 861 / OCM 144 / PS).